Here is a 73-residue protein sequence, read N- to C-terminus: Translation initiation factor IF-1 (73 aa).

The S1-like domain occupies 1-73; that stretch reads MANKEELIEF…SKGRITYRAR (73 aa).

This sequence belongs to the IF-1 family. In terms of assembly, component of the 30S ribosomal translation pre-initiation complex which assembles on the 30S ribosome in the order IF-2 and IF-3, IF-1 and N-formylmethionyl-tRNA(fMet); mRNA recruitment can occur at any time during PIC assembly.

The protein localises to the cytoplasm. Functionally, one of the essential components for the initiation of protein synthesis. Stabilizes the binding of IF-2 and IF-3 on the 30S subunit to which N-formylmethionyl-tRNA(fMet) subsequently binds. Helps modulate mRNA selection, yielding the 30S pre-initiation complex (PIC). Upon addition of the 50S ribosomal subunit IF-1, IF-2 and IF-3 are released leaving the mature 70S translation initiation complex. This is Translation initiation factor IF-1 from Acinetobacter baylyi (strain ATCC 33305 / BD413 / ADP1).